The chain runs to 150 residues: Large ribosomal subunit protein bL9 (150 aa).

This sequence belongs to the bacterial ribosomal protein bL9 family.

Functionally, binds to the 23S rRNA. In Cupriavidus metallidurans (strain ATCC 43123 / DSM 2839 / NBRC 102507 / CH34) (Ralstonia metallidurans), this protein is Large ribosomal subunit protein bL9.